The following is a 314-amino-acid chain: Serine/threonine-protein phosphatase PP2A-5 catalytic subunit (314 aa).

D62, H64, D90, and N122 together coordinate Mn(2+). The active-site Proton donor is H123. Mn(2+) contacts are provided by H172 and H246.

The protein belongs to the PPP phosphatase family. PP-2A subfamily. It depends on Mn(2+) as a cofactor.

It is found in the cytoplasm. It catalyses the reaction O-phospho-L-seryl-[protein] + H2O = L-seryl-[protein] + phosphate. The enzyme catalyses O-phospho-L-threonyl-[protein] + H2O = L-threonyl-[protein] + phosphate. The chain is Serine/threonine-protein phosphatase PP2A-5 catalytic subunit (NPP5) from Nicotiana tabacum (Common tobacco).